A 389-amino-acid polypeptide reads, in one-letter code: D(-)-tartrate dehydratase (389 aa).

Substrate contacts are provided by residues Asn-21, Asn-55, Lys-102, Tyr-156, Lys-182, 182-184 (KMK), 213-215 (DAN), Glu-239, Glu-265, His-322, and 341-343 (ESY). Lys-184 acts as the acceptor in catalysis. Mg(2+) contacts are provided by Asp-213, Glu-239, and Glu-265. His-322 (proton donor/acceptor) is an active-site residue.

This sequence belongs to the mandelate racemase/muconate lactonizing enzyme family. Homooctamer; tetramer of dimers. Requires Mg(2+) as cofactor.

It carries out the reaction (S,S)-tartrate = oxaloacetate + H2O. In terms of biological role, catalyzes the dehydration of D-tartrate to oxaloacetate. The sequence is that of D(-)-tartrate dehydratase (tarD) from Bradyrhizobium diazoefficiens (strain JCM 10833 / BCRC 13528 / IAM 13628 / NBRC 14792 / USDA 110).